Here is a 309-residue protein sequence, read N- to C-terminus: Olfactory receptor 1L8 (309 aa).

Over 1-26 (MERINHTSSVSEFILLGLSSRPEDQK) the chain is Extracellular. A glycan (N-linked (GlcNAc...) asparagine) is linked at asparagine 5. The helical transmembrane segment at 27-50 (TLFVLFLIVYLVTITGNLLIILAI) threads the bilayer. At 51–58 (RFNPHLQT) the chain is on the cytoplasmic side. A helical membrane pass occupies residues 59 to 80 (PMYFFLSFLSLTDICFTTSVVP). At 81–101 (KMLMNFLSEKKTISYAGCLTQ) the chain is on the extracellular side. An intrachain disulfide couples cysteine 98 to cysteine 190. Residues 102-121 (MYFLYALGNSDSCLLAVMAF) traverse the membrane as a helical segment. Residues 122–140 (DRYVAVCDPFHYVTTMSHH) lie on the Cytoplasmic side of the membrane. The helical transmembrane segment at 141–159 (HCVLLVAFSCSFPHLHSLL) threads the bilayer. Topologically, residues 160–197 (HTLLLNRLTFCDSNVIHHFLCDLSPVLKLSCSSIFVNE) are extracellular. The helical transmembrane segment at 198-220 (IVQMTEAPIVLVTRFLCIAFSYI) threads the bilayer. The Cytoplasmic segment spans residues 221–237 (RILTTVLKIPSTSGKRK). The chain crosses the membrane as a helical span at residues 238 to 260 (AFSTCGFYLTVVTLFYGSIFCVY). Topologically, residues 261–272 (LQPPSTYAVKDH) are extracellular. The chain crosses the membrane as a helical span at residues 273-292 (VATIVYTVLSSMLNPFIYSL). Residues 293 to 309 (RNKDLKQGLRKLMSKRS) lie on the Cytoplasmic side of the membrane.

It belongs to the G-protein coupled receptor 1 family.

The protein resides in the cell membrane. In terms of biological role, odorant receptor. This Homo sapiens (Human) protein is Olfactory receptor 1L8 (OR1L8).